The chain runs to 124 residues: Fluoride-specific ion channel FluC (124 aa).

4 consecutive transmembrane segments (helical) span residues 1–21 (MAYL…HFIN), 36–56 (TFFI…YLAF), 66–86 (LFLM…SLDA), and 94–114 (AVGL…AGLF). Na(+) is bound by residues Gly-74 and Thr-77.

This sequence belongs to the fluoride channel Fluc/FEX (TC 1.A.43) family.

The protein resides in the cell inner membrane. The enzyme catalyses fluoride(in) = fluoride(out). With respect to regulation, na(+) is not transported, but it plays an essential structural role and its presence is essential for fluoride channel function. In terms of biological role, fluoride-specific ion channel. Important for reducing fluoride concentration in the cell, thus reducing its toxicity. This is Fluoride-specific ion channel FluC from Rhodopseudomonas palustris (strain ATCC BAA-98 / CGA009).